A 948-amino-acid chain; its full sequence is Peroxisomal ATPase pex6 (948 aa).

Residue 695-702 (GPPGTGKT) participates in ATP binding.

This sequence belongs to the AAA ATPase family. In terms of assembly, interacts with PEX1; forming the PEX1-PEX6 AAA ATPase complex, which is composed of a heterohexamer formed by a trimer of PEX1-PEX6 dimers.

The protein resides in the cytoplasm. It localises to the cytosol. It is found in the peroxisome membrane. The enzyme catalyses ATP + H2O = ADP + phosphate + H(+). Functionally, component of the PEX1-PEX6 AAA ATPase complex, a protein dislocase complex that mediates the ATP-dependent extraction of the PEX5 receptor from peroxisomal membranes, an essential step for PEX5 recycling. Specifically recognizes PEX5 monoubiquitinated at 'Cys-6', and pulls it out of the peroxisome lumen through the PEX2-PEX10-PEX12 retrotranslocation channel. Extraction by the PEX1-PEX6 AAA ATPase complex is accompanied by unfolding of the TPR repeats and release of bound cargo from PEX5. The chain is Peroxisomal ATPase pex6 (pex6) from Schizosaccharomyces pombe (strain 972 / ATCC 24843) (Fission yeast).